The primary structure comprises 437 residues: Aspartic proteinase CDR1 (437 aa).

An N-terminal signal peptide occupies residues 1–25 (MASLFSSVLLSLCLLSSLFLSNANA). Residues 26–73 (KPKLGFTADLIHRDSPKSPFYNPMETSSQRLRNAIHRSVNRVFHFTEK) constitute a propeptide, activation peptide. In terms of domain architecture, Peptidase A1 spans 90 to 430 (YLMNVSIGTP…DTVSKTVSFK (341 aa)). N-linked (GlcNAc...) asparagine glycosylation occurs at N93. Active-site residues include D108 and D319.

The protein belongs to the peptidase A1 family.

The protein resides in the secreted. Its subcellular location is the extracellular space. The protein localises to the apoplast. Its function is as follows. Involved in salicylic acid-dependent inducible resistance responses. May release an endogenous peptide elicitor required for the activation of inducible resistance mechanisms. Possesses protease activity in vitro. The chain is Aspartic proteinase CDR1 (CDR1) from Arabidopsis thaliana (Mouse-ear cress).